Consider the following 648-residue polypeptide: Macrolide export ATP-binding/permease protein MacB (648 aa).

An ABC transporter domain is found at 5–243 (LELCNVSRSY…QGVDAAVVNT (239 aa)). 41–48 (GVSGSGKS) serves as a coordination point for ATP. 5 helical membrane-spanning segments follow: residues 273–293 (LLTM…VVVG), 417–437 (ANVV…IGVA), 523–543 (LFLT…VMNI), 577–597 (VLVC…IAFM), and 611–631 (LTAL…FGWL).

This sequence belongs to the ABC transporter superfamily. Macrolide exporter (TC 3.A.1.122) family. Homodimer. Part of the tripartite efflux system MacAB-TolC, which is composed of an inner membrane transporter, MacB, a periplasmic membrane fusion protein, MacA, and an outer membrane component, TolC. The complex forms a large protein conduit and can translocate molecules across both the inner and outer membranes. Interacts with MacA.

The protein resides in the cell inner membrane. Part of the tripartite efflux system MacAB-TolC. MacB is a non-canonical ABC transporter that contains transmembrane domains (TMD), which form a pore in the inner membrane, and an ATP-binding domain (NBD), which is responsible for energy generation. Confers resistance against macrolides. This Salmonella typhimurium (strain LT2 / SGSC1412 / ATCC 700720) protein is Macrolide export ATP-binding/permease protein MacB.